A 79-amino-acid polypeptide reads, in one-letter code: Serine protease inhibitor Kazal-type 1 (79 aa).

The signal sequence occupies residues 1-23 (MKVTGIFLLSALALLSLSGNTGA). Residues 26–79 (LGREAKCYNELNGCTKIYDPVCGTDGNTYPNECVLCFENRKRQTSILIQKSGPC) form the Kazal-like domain. Cystine bridges form between Cys-32-Cys-61, Cys-39-Cys-58, and Cys-47-Cys-79.

It localises to the secreted. Serine protease inhibitor which exhibits anti-trypsin activity. In the pancreas, protects against trypsin-catalyzed premature activation of zymogens. Functionally, in the male reproductive tract, binds to sperm heads where it modulates sperm capacitance by inhibiting calcium uptake and nitrogen oxide (NO) production. The sequence is that of Serine protease inhibitor Kazal-type 1 (SPINK1) from Homo sapiens (Human).